Here is a 258-residue protein sequence, read N- to C-terminus: Venom plasminogen activator TSV-PA (258 aa).

The first 18 residues, 1–18 (MELIRVLANLLILQLSYA), serve as a signal peptide directing secretion. A propeptide spanning residues 19-24 (QKSSEL) is cleaved from the precursor. Positions 25–249 (VFGGDECNIN…YLDWIKSIIA (225 aa)) constitute a Peptidase S1 domain. Cystine bridges form between Cys31-Cys163, Cys50-Cys66, Cys98-Cys256, Cys142-Cys210, Cys174-Cys189, and Cys200-Cys225. Active-site charge relay system residues include His65 and Asp110. Residue Asn185 is glycosylated (N-linked (GlcNAc...) asparagine). The active-site Charge relay system is the Ser204.

This sequence belongs to the peptidase S1 family. Snake venom subfamily. Monomer. Expressed by the venom gland.

It is found in the secreted. Snake venom serine protease that activates plasminogen. The polypeptide is Venom plasminogen activator TSV-PA (Trimeresurus stejnegeri (Chinese green tree viper)).